Here is a 546-residue protein sequence, read N- to C-terminus: Chaperonin GroEL (546 aa).

Residues 29 to 32 (TLGP), 86 to 90 (DGTTT), Gly413, 476 to 478 (NAA), and Asp492 each bind ATP. The disordered stretch occupies residues 521-546 (RPDESGNDAGAGAQGMDPSMMGGGMM).

It belongs to the chaperonin (HSP60) family. In terms of assembly, forms a cylinder of 14 subunits composed of two heptameric rings stacked back-to-back. Interacts with the co-chaperonin GroES.

The protein resides in the cytoplasm. It carries out the reaction ATP + H2O + a folded polypeptide = ADP + phosphate + an unfolded polypeptide.. In terms of biological role, together with its co-chaperonin GroES, plays an essential role in assisting protein folding. The GroEL-GroES system forms a nano-cage that allows encapsulation of the non-native substrate proteins and provides a physical environment optimized to promote and accelerate protein folding. The protein is Chaperonin GroEL of Tetragenococcus halophilus (Pediococcus halophilus).